The following is a 353-amino-acid chain: Rhodopsin (353 aa).

Over methionine 1 to alanine 36 the chain is Extracellular. 2 N-linked (GlcNAc...) asparagine glycosylation sites follow: asparagine 2 and asparagine 15. Residues tyrosine 37–valine 61 form a helical membrane-spanning segment. The Cytoplasmic segment spans residues threonine 62–asparagine 73. The helical transmembrane segment at tyrosine 74 to tyrosine 96 threads the bilayer. At threonine 97–cysteine 110 the chain is on the extracellular side. An intrachain disulfide couples cysteine 110 to cysteine 187. A helical membrane pass occupies residues asparagine 111 to valine 133. A 'Ionic lock' involved in activated form stabilization motif is present at residues glutamate 134–tryptophan 136. Over glutamate 134–histidine 152 the chain is Cytoplasmic. A helical transmembrane segment spans residues alanine 153–valine 173. At glycine 174–serine 202 the chain is on the extracellular side. Residue asparagine 200 is glycosylated (N-linked (GlcNAc...) asparagine). A helical transmembrane segment spans residues phenylalanine 203–glycine 224. Residues arginine 225 to arginine 252 are Cytoplasmic-facing. The chain crosses the membrane as a helical span at residues methionine 253–tyrosine 274. Residues isoleucine 275–leucine 286 are Extracellular-facing. A helical membrane pass occupies residues phenylalanine 287–cysteine 308. N6-(retinylidene)lysine is present on lysine 296. Over methionine 309–alanine 353 the chain is Cytoplasmic. Residues cysteine 322 and cysteine 323 are each lipidated (S-palmitoyl cysteine). The disordered stretch occupies residues glutamate 329 to alanine 353. Low complexity predominate over residues alanine 334–alanine 353.

It belongs to the G-protein coupled receptor 1 family. Opsin subfamily. Post-translationally, phosphorylated on some or all of the serine and threonine residues present in the C-terminal region. In terms of processing, contains one covalently linked retinal chromophore.

Its subcellular location is the membrane. It is found in the cell projection. The protein resides in the cilium. The protein localises to the photoreceptor outer segment. Functionally, photoreceptor required for image-forming vision at low light intensity. While most salt water fish species use retinal as chromophore, most freshwater fish use 3-dehydroretinal, or a mixture of retinal and 3-dehydroretinal. Light-induced isomerization of 11-cis to all-trans retinal triggers a conformational change that activates signaling via G-proteins. Subsequent receptor phosphorylation mediates displacement of the bound G-protein alpha subunit by arrestin and terminates signaling. The chain is Rhodopsin (rho) from Chelon auratus (Golden grey mullet).